The sequence spans 179 residues: Oryzines biosynthesis cluster protein J (179 aa).

Positions 88–148 (YVDYHPGCEP…NHCWRNPSKT (61 aa)) constitute a Cupin type-2 domain.

This sequence belongs to the oryJ family.

Its pathway is secondary metabolite biosynthesis. Part of the gene cluster that mediates the biosynthesis of oryzines, natural products with an unusual maleidride backbone. The two subunits of the fungal fatty acid synthase oryfasA and oryfasB probably form octenoic acid. This fatty acid is most likely activated by the acyl-CoA ligase oryP to give octenyl-CoA before the citrate synthase-like protein oryE catalyzes condensation with oxaloacetate to form tricarboxylic acid. The next steps of the pathways are conjectural, but a favorite possible route has been proposed, beginning with decarboxylation and concomitant dehydration by the decarboxylase oryM, followed by tautomerization, which may lead to the production of a diene intermediate. Reduction of this diene intermediate could give the known metabolite piliformic acid. On the pathway to oryzine B and oryzine A, however, hydroxylation of the diene by the alpha-ketoglutarate-dependent dioxygenase oryG and lactonisation by the lactonohydrolases oryH or oryL could give oryzine B directly. Finally, enoyl reduction by the dehydrogenase oryD would then convert oryzine B into oryzine A. The polypeptide is Oryzines biosynthesis cluster protein J (Aspergillus oryzae (strain ATCC 42149 / RIB 40) (Yellow koji mold)).